Here is a 667-residue protein sequence, read N- to C-terminus: Probable oxidoreductase YyaE (667 aa).

The 58-residue stretch at Ser2–Asp59 folds into the 4Fe-4S Mo/W bis-MGD-type domain. [4Fe-4S] cluster-binding residues include Cys9, Cys13, Cys17, and Cys45.

The protein belongs to the prokaryotic molybdopterin-containing oxidoreductase family. Requires Mo-bis(molybdopterin guanine dinucleotide) as cofactor.

The chain is Probable oxidoreductase YyaE (yyaE) from Bacillus subtilis (strain 168).